Reading from the N-terminus, the 339-residue chain is 7,8-didemethyl-8-hydroxy-5-deazariboflavin synthase (339 aa).

The Radical SAM core domain occupies 25 to 256 (ATYSPAYTIV…PDITIQIPPN (232 aa)). The [4Fe-4S] cluster site is built by Cys39, Cys43, and Cys46.

It belongs to the radical SAM superfamily. CofG family. As to quaternary structure, consists of two subunits, CofG and CofH. Requires [4Fe-4S] cluster as cofactor.

The enzyme catalyses 5-amino-5-(4-hydroxybenzyl)-6-(D-ribitylimino)-5,6-dihydrouracil + S-adenosyl-L-methionine = 7,8-didemethyl-8-hydroxy-5-deazariboflavin + 5'-deoxyadenosine + L-methionine + NH4(+) + H(+). It functions in the pathway cofactor biosynthesis; coenzyme F0 biosynthesis. Functionally, catalyzes the radical-mediated synthesis of 7,8-didemethyl-8-hydroxy-5-deazariboflavin from 5-amino-5-(4-hydroxybenzyl)-6-(D-ribitylimino)-5,6-dihydrouracil. The chain is 7,8-didemethyl-8-hydroxy-5-deazariboflavin synthase from Nostoc sp. (strain PCC 7120 / SAG 25.82 / UTEX 2576).